The sequence spans 100 residues: Small ribosomal subunit protein uS14c (100 aa).

The protein belongs to the universal ribosomal protein uS14 family. Part of the 30S ribosomal subunit.

The protein localises to the plastid. Its subcellular location is the chloroplast. Functionally, binds 16S rRNA, required for the assembly of 30S particles. This chain is Small ribosomal subunit protein uS14c, found in Guillardia theta (Cryptophyte).